A 149-amino-acid chain; its full sequence is Probable cyclic pyranopterin monophosphate synthase (149 aa).

Substrate is bound by residues 67-69 (LCH) and 103-104 (ME). Aspartate 118 is a catalytic residue.

The protein belongs to the MoaC family. As to quaternary structure, homohexamer; trimer of dimers.

The enzyme catalyses (8S)-3',8-cyclo-7,8-dihydroguanosine 5'-triphosphate = cyclic pyranopterin phosphate + diphosphate. It functions in the pathway cofactor biosynthesis; molybdopterin biosynthesis. Catalyzes the conversion of (8S)-3',8-cyclo-7,8-dihydroguanosine 5'-triphosphate to cyclic pyranopterin monophosphate (cPMP). The sequence is that of Probable cyclic pyranopterin monophosphate synthase from Saccharolobus solfataricus (strain ATCC 35092 / DSM 1617 / JCM 11322 / P2) (Sulfolobus solfataricus).